Consider the following 176-residue polypeptide: Disulfide bond formation protein B (176 aa).

Residues 1-14 (MLRFLNQCSRGRGA) lie on the Cytoplasmic side of the membrane. A helical transmembrane segment spans residues 15–31 (WLLMAFTALALEMVALW). Over 32-49 (FQHVMLLKPCVLCIYERC) the chain is Periplasmic. A disulfide bond links Cys41 and Cys44. A helical transmembrane segment spans residues 50-65 (ALFGVMGAGLVGAIAP). At 66-71 (KTPLRY) the chain is on the cytoplasmic side. The helical transmembrane segment at 72 to 89 (VAMVIWIYSAWRGLQLAY) threads the bilayer. Residues 90-144 (EHTMIQLHPSPFMTCDFMARFPDWLPLGKWLPQVFVASGDCAERQWSFLTLEMPQ) lie on the Periplasmic side of the membrane. The cysteines at positions 104 and 130 are disulfide-linked. Residues 145–163 (WLLGIFAAYLVVAIAVVIA) traverse the membrane as a helical segment. At 164–176 (QAFKPKKRDLFGR) the chain is on the cytoplasmic side.

This sequence belongs to the DsbB family.

The protein resides in the cell inner membrane. Required for disulfide bond formation in some periplasmic proteins. Acts by oxidizing the DsbA protein. This Salmonella paratyphi A (strain ATCC 9150 / SARB42) protein is Disulfide bond formation protein B.